The sequence spans 258 residues: uncharacterized protein (258 aa).

A signal peptide spans 1–23; sequence MVWCHYILLVLTFFLFTTFFTAA. The Cytoplasmic portion of the chain corresponds to 24-64; the sequence is CPAIFTWLNSLFRLSNDSPHVVHTSIAEVGDIEDGRVDKDG. Residues 65–85 form a helical membrane-spanning segment; the sequence is VLFVDLEFFLGCLPFFFFALV. Topologically, residues 86–123 are extracellular; it reads DQSSSSSVCKPLSPSDAKRSSNSLLRLSLVSSNDSDSS. Residue Asn118 is glycosylated (N-linked (GlcNAc...) asparagine). Residues 124 to 144 form a helical membrane-spanning segment; that stretch reads VSVSTFAFFFFFLFFLFFVFT. Residues 145-230 are Cytoplasmic-facing; the sequence is CTFSSELTSS…SSSISFRISS (86 aa). Residues 231-251 traverse the membrane as a helical segment; that stretch reads IFFLCSLVFMWFFNCFSDLNV. The Extracellular segment spans residues 252–258; sequence LLQIKHS.

It localises to the membrane. This is an uncharacterized protein from Saccharomyces cerevisiae (strain ATCC 204508 / S288c) (Baker's yeast).